Here is a 337-residue protein sequence, read N- to C-terminus: Glyceraldehyde-3-phosphate dehydrogenase, cytosolic (337 aa).

The segment at 1-151 is binding to NAD; the sequence is MAKVKVGING…YKSDLNIVSN (151 aa). NAD(+) contacts are provided by residues 13-14, Asp35, and Arg82; that span reads RI. The segment at 152 to 337 is catalytic; the sequence is ASCTTNCLAP…DLIMHISKCQ (186 aa). D-glyceraldehyde 3-phosphate-binding positions include 153–155, Thr184, 213–214, and Arg236; these read SCT and TG. The active-site Nucleophile is the Cys154. Asn318 lines the NAD(+) pocket.

It belongs to the glyceraldehyde-3-phosphate dehydrogenase family. In terms of assembly, homotetramer.

The protein localises to the cytoplasm. It carries out the reaction D-glyceraldehyde 3-phosphate + phosphate + NAD(+) = (2R)-3-phospho-glyceroyl phosphate + NADH + H(+). Its pathway is carbohydrate degradation; glycolysis; pyruvate from D-glyceraldehyde 3-phosphate: step 1/5. Functionally, key enzyme in glycolysis that catalyzes the first step of the pathway by converting D-glyceraldehyde 3-phosphate (G3P) into 3-phospho-D-glyceroyl phosphate. Essential for the maintenance of cellular ATP levels and carbohydrate metabolism. This is Glyceraldehyde-3-phosphate dehydrogenase, cytosolic (GAPC) from Mesembryanthemum crystallinum (Common ice plant).